The chain runs to 375 residues: Ornithine transcarbamylase, chloroplastic (375 aa).

Residues M1–Q53 constitute a chloroplast transit peptide. A54 carries the N-acetylalanine modification. Residues S123 to T126, R174, H201, and Q204 each bind carbamoyl phosphate. The L-ornithine site is built by N232, D293, S297, and M298. C333 acts as the Proton acceptor in catalysis. Residues C333–L334 and R361 contribute to the carbamoyl phosphate site.

It belongs to the aspartate/ornithine carbamoyltransferase superfamily. OTCase family.

The protein localises to the plastid. It is found in the chloroplast. It carries out the reaction carbamoyl phosphate + L-ornithine = L-citrulline + phosphate + H(+). The chain is Ornithine transcarbamylase, chloroplastic (OTC) from Arabidopsis thaliana (Mouse-ear cress).